The chain runs to 60 residues: Cytotoxin 1 (60 aa).

4 disulfide bridges follow: cysteine 3–cysteine 21, cysteine 14–cysteine 38, cysteine 42–cysteine 53, and cysteine 54–cysteine 59.

The protein belongs to the three-finger toxin family. Short-chain subfamily. Type IA cytotoxin sub-subfamily. As to quaternary structure, monomer in solution; Homodimer and oligomer in the presence of negatively charged lipids forming a pore with a size ranging between 20 and 30 Angstroms. Expressed by the venom gland.

Its subcellular location is the secreted. It is found in the target cell membrane. In terms of biological role, shows cytolytic activity on many different cells by forming pore in lipid membranes. In vivo, increases heart rate or kills the animal by cardiac arrest. In addition, it binds to heparin with high affinity, interacts with Kv channel-interacting protein 1 (KCNIP1) in a calcium-independent manner, and binds to integrin alpha-V/beta-3 (ITGAV/ITGB3) with moderate affinity. This Naja mossambica (Mozambique spitting cobra) protein is Cytotoxin 1.